Consider the following 943-residue polypeptide: Protein translocase subunit SecA (943 aa).

ATP is bound by residues Q90, 108 to 112 (GEGKT), and D509. The interval 535-562 (PDNEHKPPIPKQRNSKSKGGFSRKAGSN) is disordered.

It belongs to the SecA family. In terms of assembly, monomer and homodimer. Part of the essential Sec protein translocation apparatus which comprises SecA, SecYEG and auxiliary proteins SecDF. Other proteins may also be involved.

The protein localises to the cell inner membrane. Its subcellular location is the cellular thylakoid membrane. It localises to the cytoplasm. It carries out the reaction ATP + H2O + cellular proteinSide 1 = ADP + phosphate + cellular proteinSide 2.. Part of the Sec protein translocase complex. Interacts with the SecYEG preprotein conducting channel. Has a central role in coupling the hydrolysis of ATP to the transfer of proteins into and across the cell membrane, serving as an ATP-driven molecular motor driving the stepwise translocation of polypeptide chains across the membrane. Functionally, probably participates in protein translocation into and across both the cytoplasmic and thylakoid membranes in cyanobacterial cells. The polypeptide is Protein translocase subunit SecA (Prochlorococcus marinus (strain AS9601)).